The sequence spans 511 residues: MTNQESQSVKVVFVTRDETLQPEAPLPPVMVPTSLKRLGLSEIVNQLLDTETPVPLDFLIVKATAGDGGASILDEESASSSSVLLRPGASLESFLADNGLSSEVSLSIEYIRSVLPPSFLASFSNPDWVAAVDINARWTGDLKPVIASGSYDGVVRLWDHSGHVTGQLVGHNSAAKAVRWISNDQLVSGGSDRLLYLWNPDGKKYRRKEPGQVGKKELNYDSEEDSDEEMLDELPAASTVTPMAALHGHTAPINDLAVHAKTGKIISASADGSVGLWSTDYNDMPAIEPHTAAAGGLTSTSAQKRRKLANSGSGATGLGAARQRGPLAVMGGHSAAVSAVAFHHSDPTVAYSVSLDHTIKTWDLATAEAVQSNAGSPDPSVDTRSTSFSLLSLCTLPQGLIACGSSARHITLHDPRVTAQVATQAKLVGHTNFVSSLSRGPESNPFLLASGSHDGTVRIWDVRTTKSLHVIHRETLTENNAVFGVDWKQNLGIVSGGQDNKIQINNNPQSA.

The interval 9–112 is ubiquitin-like (UBL) domain; that stretch reads VKVVFVTRDE…EVSLSIEYIR (104 aa). The tract at residues 122 to 511 is sufficient for interaction with ERB1 and association with 66S pre-ribosomes; the sequence is SFSNPDWVAA…IQINNNPQSA (390 aa). WD repeat units follow at residues 124–168, 170–208, 248–287, 332–372, 383–423, 429–470, and 477–511; these read SNPD…TGQL, GHNS…YRRK, GHTA…MPAI, GHSA…AVQS, TRST…QVAT, GHTN…SLHV, and TENN…PQSA. A disordered region spans residues 207–228; sequence RKEPGQVGKKELNYDSEEDSDE. Residues 208 to 219 are compositionally biased toward basic and acidic residues; the sequence is KEPGQVGKKELN.

This sequence belongs to the WD repeat WDR12/YTM1 family. As to quaternary structure, component of the NOP7 complex, composed of ERB1, NOP7 and YTM1. The complex is held together by ERB1, which interacts with NOP7 via its N-terminal domain and with YTM1 via a high-affinity interaction between the seven-bladed beta-propeller domains of the 2 proteins. The NOP7 complex associates with the 66S pre-ribosome. Interacts (via UBL domain) with MDN1 (via VWFA/MIDAS domain).

It is found in the nucleus. Its subcellular location is the nucleolus. The protein resides in the nucleoplasm. Component of the NOP7 complex, which is required for maturation of the 25S and 5.8S ribosomal RNAs and formation of the 60S ribosome. This is Ribosome biogenesis protein YTM1 from Yarrowia lipolytica (strain CLIB 122 / E 150) (Yeast).